Here is a 366-residue protein sequence, read N- to C-terminus: Alanine racemase (366 aa).

Lys-40 (proton acceptor; specific for D-alanine) is an active-site residue. Lys-40 carries the post-translational modification N6-(pyridoxal phosphate)lysine. Arg-136 contributes to the substrate binding site. Tyr-263 serves as the catalytic Proton acceptor; specific for L-alanine. A substrate-binding site is contributed by Met-310.

The protein belongs to the alanine racemase family. It depends on pyridoxal 5'-phosphate as a cofactor.

The enzyme catalyses L-alanine = D-alanine. It functions in the pathway amino-acid biosynthesis; D-alanine biosynthesis; D-alanine from L-alanine: step 1/1. Its function is as follows. Catalyzes the interconversion of L-alanine and D-alanine. May also act on other amino acids. In Streptococcus pyogenes serotype M2 (strain MGAS10270), this protein is Alanine racemase (alr).